Consider the following 235-residue polypeptide: Eukaryotic translation initiation factor 4E-1 (235 aa).

The span at 1-16 (MAVEDTPKSVVTEEAK) shows a compositional bias: basic and acidic residues. The segment at 1 to 59 (MAVEDTPKSVVTEEAKPNSIENPIDRYHEEGDDAEEGEIAGGEGDGNVDESSKSGVPES) is disordered. EIF4G-binding stretches follow at residues 60 to 63 (HPLE) and 70 to 106 (FDNP…NNMK). MRNA-binding positions include 78-83 (KQTSWG), lysine 110, and 128-129 (WE). Cysteine 133 and cysteine 171 are oxidised to a cystine. Residues 154–163 (YTLLALIGEQ) form an EIF4G-binding region. MRNA contacts are provided by residues 178–183 (RGKQER) and 223–227 (KKLDR).

Belongs to the eukaryotic initiation factor 4E family. In terms of assembly, EIF4F is a multi-subunit complex, the composition of which varies with external and internal environmental conditions. It is composed of at least EIF4A, EIF4E and EIF4G. EIF4E is also known to interact with other partners. In higher plants two isoforms of EIF4F have been identified, named isoform EIF4F and isoform EIF(iso)4F. Isoform EIF4F has subunits p220 and p26, whereas isoform EIF(iso)4F has subunits p82 and p28. Interacts directly with EXA1. (Microbial infection) Interacts with viral genome-linked protein (VPg); this interaction is possible in susceptible hosts but impaired in resistant plants. Post-translationally, according to the redox status, the Cys-133-Cys-171 disulfide bridge may have a role in regulating protein function by affecting its ability to bind capped mRNA. Expressed in all tissues except in the cells of the specialization zone of the roots.

It is found in the nucleus. It localises to the cytoplasm. In terms of biological role, component of the protein complex eIF4F, which is involved in the recognition of the mRNA cap, ATP-dependent unwinding of 5'-terminal secondary structure and recruitment of mRNA to the ribosome. Recognizes and binds the 7-methylguanosine-containing mRNA cap during an early step in the initiation of protein synthesis and facilitates ribosome binding by inducing the unwinding of the mRNAs secondary structures. Key component of recessive resistance to potyviruses. Functionally, (Microbial infection) Susceptibility host factor required for viral infection by recruiting viral RNAs to the host ribosomal complex via an interaction with viral genome-linked protein (VPg). In Arabidopsis thaliana (Mouse-ear cress), this protein is Eukaryotic translation initiation factor 4E-1.